Reading from the N-terminus, the 591-residue chain is MAARHHTLSWSIASLHGDEQAVGAPLTTTELTALARTRLFGATGTVLMAIGALGAGARPVVQDPTFGVRLLNLPSRIQTVSLTMTTTGAVMMALAWLMLGRFTLGRRRMSRGKLDRTLLLWMLPLLIAPPMYSKDVYSYLAQSEIGRDGLDPYRVGPASGLGLGHVFTLSVPSLWRETPAPYGPLFLWIGRGISSLTGENIVAAVLCHRLVVLIGVTLIVWATPRLAQRCGVAEVSALWLGAANPLLIMHLVAGIHNEALMLGLMLTGVEFALRGLDMANTPRPSPETWRLGPATIRASRRPELGASPRAGASRAVKPRPEWGPLAMLLAGSILITLSSQVKLPSLLAMGFVTTVLAYRWGGNLRALLLAAAVMASLTLAIMAILGWASGLGFGWINTLGTANVVRSWMSPPTLLALGTGHVGILLGLGDHTTAVLSLTRAIGVLIITVMVCWLLLAVLRGRLHPIGGLGVALAVTVLLFPVVQPWYLLWAIIPLAAWATRPGFRVAAILATLIVGIFGPTANGDRFALFQIVDATAASAIIVILLIALTYTRLPWRPLAAEQVVTAAESASKTPATRRPTAAPDAYADST.

Helical transmembrane passes span 40-60 (FGATGTVLMAIGALGAGARPV), 80-100 (VSLTMTTTGAVMMALAWLMLG), 117-137 (TLLLWMLPLLIAPPMYSKDVY), 201-221 (IVAAVLCHRLVVLIGVTLIVW), 235-255 (VSALWLGAANPLLIMHLVAGI), 259-279 (ALMLGLMLTGVEFALRGLDMA), 321-341 (EWGPLAMLLAGSILITLSSQV), 367-387 (LLLAAAVMASLTLAIMAILGW), 408-428 (WMSPPTLLALGTGHVGILLGL), 441-461 (AIGVLIITVMVCWLLLAVLRG), 473-493 (LAVTVLLFPVVQPWYLLWAII), 502-522 (PGFRVAAILATLIVGIFGPTA), and 527-547 (FALFQIVDATAASAIIVILLI). The disordered stretch occupies residues 569–591 (ESASKTPATRRPTAAPDAYADST). A compositionally biased stretch (low complexity) spans 574-584 (TPATRRPTAAP).

Belongs to the MptA/B family.

It localises to the membrane. Functionally, catalyzes the addition of alpha-(1-&gt;6)-mannose residue. This is Alpha-(1-&gt;6)-mannopyranosyltransferase Rv1459c from Mycobacterium tuberculosis (strain ATCC 25618 / H37Rv).